The sequence spans 180 residues: Transcription factor IBH1-like 1 (180 aa).

Residues 110-160 (KSKSASEEAAAKAKRLVKRRTQGLRNVVPGGELMSNDVLLLQETLDYIVSL) enclose the bHLH domain.

The protein belongs to the bHLH protein family.

It localises to the nucleus. Functions redundandly with IBH1/BHLH158 in a regulation node known as the incoherent feed-forward loop (FFL). Acts as transcriptional repressor that negatively regulates cell and organ elongation in response to gibberellin (GA) and brassinosteroid (BR) signaling. The protein is Transcription factor IBH1-like 1 of Arabidopsis thaliana (Mouse-ear cress).